The sequence spans 337 residues: Diacylglycerol O-acyltransferase 2-like protein 6 (337 aa).

The next 2 helical transmembrane spans lie at 22–42 (IPVYIFLGAIPILLIPYFLLF) and 102–122 (YIIANHPHGILSFGVFINFAT).

It belongs to the diacylglycerol acyltransferase family. As to expression, expressed in all tissues tested except pancreas.

It localises to the endoplasmic reticulum membrane. The catalysed reaction is 1,2-di-(9Z-octadecenoyl)-sn-glycerol + (9Z)-octadecenoyl-CoA = 1,2,3-tri-(9Z-octadecenoyl)-glycerol + CoA. The enzyme catalyses 1-O-(9Z-octadecenyl)-glycerol + (9Z)-octadecenoyl-CoA = 1-O-(9Z-octadecyl)-3-(9Z-octadecenoyl)-glycerol + CoA. It carries out the reaction 1-(9Z-octadecenoyl)-glycerol + (9Z)-octadecenoyl-CoA = 1,2-di-(9Z-octadecenoyl)-glycerol + CoA. Its function is as follows. Diglyceride acyltransferase that uses fatty acyl-CoA as substrate. Particularly active with oleate as a substrate. Has no wax synthase activity to produce wax esters. Able to use 1-monoalkylglycerol (1-MAkG) as an acyl acceptor for the synthesis of monoalkyl-monoacylglycerol (MAMAG). This chain is Diacylglycerol O-acyltransferase 2-like protein 6, found in Homo sapiens (Human).